The following is a 308-amino-acid chain: MIRHLLSSADLDAGTALQILDTAAEMATVAGREVKKLPALRGRTVVNLFYEDSTRTRISFEAAAKRLSADVINFSVKGSSVAKGESLKDTALTLQAMGADAVVVRHPASGAPYQLADWVDGSVVNAGDGTHEHPTQALLDAYTMRSRLGRLAGLSVAVVGDVLHSRVARSNVLLLSTLGAKVTLVGPPPLIPVDIAAALAPSAAVCYDLDAVLPQSDVVMMLRVQRERMNDSYFPSAREYARRYGLDGSRMRRLPEHAIVMHPGPMNRGMEITSEVADSPRSTIVEQVANGVSVRMAVLYLLLGGNNR.

Carbamoyl phosphate contacts are provided by arginine 55 and threonine 56. Lysine 83 is an L-aspartate binding site. Positions 105, 133, and 136 each coordinate carbamoyl phosphate. Residues arginine 166 and arginine 223 each coordinate L-aspartate. The carbamoyl phosphate site is built by glycine 264 and proline 265.

The protein belongs to the aspartate/ornithine carbamoyltransferase superfamily. ATCase family. As to quaternary structure, heterododecamer (2C3:3R2) of six catalytic PyrB chains organized as two trimers (C3), and six regulatory PyrI chains organized as three dimers (R2).

The catalysed reaction is carbamoyl phosphate + L-aspartate = N-carbamoyl-L-aspartate + phosphate + H(+). The protein operates within pyrimidine metabolism; UMP biosynthesis via de novo pathway; (S)-dihydroorotate from bicarbonate: step 2/3. In terms of biological role, catalyzes the condensation of carbamoyl phosphate and aspartate to form carbamoyl aspartate and inorganic phosphate, the committed step in the de novo pyrimidine nucleotide biosynthesis pathway. The chain is Aspartate carbamoyltransferase catalytic subunit from Salinispora tropica (strain ATCC BAA-916 / DSM 44818 / JCM 13857 / NBRC 105044 / CNB-440).